Consider the following 589-residue polypeptide: PTS system mannitol-specific EIICB component (589 aa).

Over 1–25 the chain is Cytoplasmic; it reads MEEKVSLKVRVQKLGTSLSNMVMPN. The PTS EIIC type-2 domain occupies 14-347; sequence LGTSLSNMVM…LHADKSTEDS (334 aa). The chain crosses the membrane as a helical span at residues 26-47; that stretch reads IGAFIAWGVLTALFIADGYLPN. At 48–51 the chain is on the extracellular side; the sequence is EQLA. A helical transmembrane segment spans residues 52–72; it reads TVVGPMLTYLLPILIGYTGGY. Over 73 to 135 the chain is Cytoplasmic; the sequence is MIHGQRGAVV…PGFEMLVNNF (63 aa). A helical transmembrane segment spans residues 136–157; it reads SAGLVGFALLLLAFYAIGPVVS. At 158-166 the chain is on the extracellular side; sequence TLTGAVGNG. Residues 167 to 187 traverse the membrane as a helical segment; it reads VEAIVNARLLPMANIIIEPAK. Topologically, residues 188–274 are cytoplasmic; it reads VLFLNNALNH…VMMKPTLFLA (87 aa). Residues 275-294 form a helical membrane-spanning segment; the sequence is AMAGGISGTFTFQLLDAGLK. At 295-316 the chain is on the extracellular side; sequence SPASPGSIIAIIATAPKGVWPH. A helical membrane pass occupies residues 317-338; sequence LNVLLGVLVAAVVSFLVAALIL. Topologically, residues 339–589 are cytoplasmic; it reads HADKSTEDSL…YDKMAARMYK (251 aa). The PTS EIIB type-2 domain maps to 381-476; sequence EKIIFACDAG…SLTGASPIAE (96 aa). Residue C387 is the Phosphocysteine intermediate; for EIIB activity of the active site. The residue at position 387 (C387) is a Phosphocysteine; by EIIA.

Homodimer.

It is found in the cell membrane. The enzyme catalyses D-mannitol(out) + N(pros)-phospho-L-histidyl-[protein] = D-mannitol 1-phosphate(in) + L-histidyl-[protein]. The phosphoenolpyruvate-dependent sugar phosphotransferase system (sugar PTS), a major carbohydrate active transport system, catalyzes the phosphorylation of incoming sugar substrates concomitantly with their translocation across the cell membrane. The enzyme II CmtAB PTS system is involved in D-mannitol transport. This is PTS system mannitol-specific EIICB component (mtlA) from Streptococcus pneumoniae serotype 4 (strain ATCC BAA-334 / TIGR4).